The following is a 599-amino-acid chain: Elongation factor 4 (599 aa).

The region spanning 5 to 187 (KNIRNFSIIA…QLVERIPAPE (183 aa)) is the tr-type G domain. Residues 17 to 22 (DHGKST) and 134 to 137 (NKID) each bind GTP.

It belongs to the TRAFAC class translation factor GTPase superfamily. Classic translation factor GTPase family. LepA subfamily.

The protein resides in the cell inner membrane. The enzyme catalyses GTP + H2O = GDP + phosphate + H(+). Required for accurate and efficient protein synthesis under certain stress conditions. May act as a fidelity factor of the translation reaction, by catalyzing a one-codon backward translocation of tRNAs on improperly translocated ribosomes. Back-translocation proceeds from a post-translocation (POST) complex to a pre-translocation (PRE) complex, thus giving elongation factor G a second chance to translocate the tRNAs correctly. Binds to ribosomes in a GTP-dependent manner. In Alcanivorax borkumensis (strain ATCC 700651 / DSM 11573 / NCIMB 13689 / SK2), this protein is Elongation factor 4.